A 217-amino-acid polypeptide reads, in one-letter code: MSQVSISKFGNPIERVDRAIDALVSGRGVLLVDDEDRENEGDLIFPAGNITAEQVALLIRECSGIICLCLPPERIEQLGLPQMVTCNTSAYQTAFTISIEAAEGVTTGVSAADRATTIRCAAALDARPEDIHSPGHVFPLRAVEQGVLGRRGHTEGTVDLMRLAGLAPAGVLCELTNVDGTMARLPQIITFADEHGFPVLSIEDIAAYRSQPIKKSA.

D-ribulose 5-phosphate-binding positions include 37–38, Asp42, 150–154, and Glu174; these read RE and RRGHT. Glu38 provides a ligand contact to Mg(2+). Position 153 (His153) interacts with Mg(2+).

Belongs to the DHBP synthase family. As to quaternary structure, homodimer. Requires Mg(2+) as cofactor. The cofactor is Mn(2+).

It catalyses the reaction D-ribulose 5-phosphate = (2S)-2-hydroxy-3-oxobutyl phosphate + formate + H(+). It participates in cofactor biosynthesis; riboflavin biosynthesis; 2-hydroxy-3-oxobutyl phosphate from D-ribulose 5-phosphate: step 1/1. Functionally, catalyzes the conversion of D-ribulose 5-phosphate to formate and 3,4-dihydroxy-2-butanone 4-phosphate. This Desulforapulum autotrophicum (strain ATCC 43914 / DSM 3382 / VKM B-1955 / HRM2) (Desulfobacterium autotrophicum) protein is 3,4-dihydroxy-2-butanone 4-phosphate synthase.